The following is a 460-amino-acid chain: Diguanylate cyclase DosC (460 aa).

Residue H98 coordinates heme. The 134-residue stretch at 325 to 458 folds into the GGDEF domain; sequence TPLSVLIIDV…GRNRVELWKA (134 aa). D333 contributes to the Mg(2+) binding site. 2 residues coordinate substrate: N341 and D350. A Mg(2+)-binding site is contributed by D376. D376 serves as the catalytic Proton acceptor.

The cofactor is heme. It depends on Mg(2+) as a cofactor.

It catalyses the reaction 2 GTP = 3',3'-c-di-GMP + 2 diphosphate. The protein operates within purine metabolism; 3',5'-cyclic di-GMP biosynthesis. In terms of biological role, globin-coupled heme-based oxygen sensor protein displaying diguanylate cyclase (DGC) activity in response to oxygen availability. Thus, catalyzes the synthesis of cyclic diguanylate (c-di-GMP) via the condensation of 2 GTP molecules. Cyclic-di-GMP is a second messenger which controls cell surface-associated traits in bacteria. This is Diguanylate cyclase DosC (dosC) from Escherichia coli O157:H7.